The chain runs to 228 residues: Ferric nitrobindin-like protein (228 aa).

The interval 1 to 21 is disordered; that stretch reads MTSDEVRDGAGSPADSSKGNK. Positions 75–81 match the GXWXGXG motif; it reads GVWRGEG.

This sequence belongs to the nitrobindin family.

The chain is Ferric nitrobindin-like protein from Mycobacterium leprae (strain TN).